We begin with the raw amino-acid sequence, 511 residues long: Histidine ammonia-lyase (511 aa).

A cross-link (5-imidazolinone (Ala-Gly)) is located at residues 142–144 (ASG). Ser143 carries the 2,3-didehydroalanine (Ser) modification.

This sequence belongs to the PAL/histidase family. In terms of processing, contains an active site 4-methylidene-imidazol-5-one (MIO), which is formed autocatalytically by cyclization and dehydration of residues Ala-Ser-Gly.

Its subcellular location is the cytoplasm. It catalyses the reaction L-histidine = trans-urocanate + NH4(+). Its pathway is amino-acid degradation; L-histidine degradation into L-glutamate; N-formimidoyl-L-glutamate from L-histidine: step 1/3. This chain is Histidine ammonia-lyase, found in Rhizobium rhizogenes (strain K84 / ATCC BAA-868) (Agrobacterium radiobacter).